The primary structure comprises 120 residues: Large ribosomal subunit protein bL17 (120 aa).

Belongs to the bacterial ribosomal protein bL17 family. Part of the 50S ribosomal subunit. Contacts protein L32.

This chain is Large ribosomal subunit protein bL17, found in Bacillus velezensis (strain DSM 23117 / BGSC 10A6 / LMG 26770 / FZB42) (Bacillus amyloliquefaciens subsp. plantarum).